The sequence spans 191 residues: Ferric nitrobindin-like protein (191 aa).

The GXWXGXG signature appears at 20–26; that stretch reads GDWAGAG.

It belongs to the nitrobindin family.

This Streptomyces coelicolor (strain ATCC BAA-471 / A3(2) / M145) protein is Ferric nitrobindin-like protein.